The following is a 361-amino-acid chain: Holliday junction branch migration complex subunit RuvB (361 aa).

2 stretches are compositionally biased toward basic and acidic residues: residues Met1 to Glu13 and Gln33 to Arg43. The disordered stretch occupies residues Met1–Arg43. The large ATPase domain (RuvB-L) stretch occupies residues Ser2–Tyr203. ATP-binding positions include Leu42, Arg43, Gly84, Lys87, Thr88, Thr89, Glu150–Phe152, Arg193, Tyr203, and Arg240. Thr88 contacts Mg(2+). The small ATPAse domain (RuvB-S) stretch occupies residues Asp204–Asp274. Positions Glu277–Phe361 are head domain (RuvB-H). DNA is bound by residues Arg332 and Arg337.

The protein belongs to the RuvB family. In terms of assembly, homohexamer. Forms an RuvA(8)-RuvB(12)-Holliday junction (HJ) complex. HJ DNA is sandwiched between 2 RuvA tetramers; dsDNA enters through RuvA and exits via RuvB. An RuvB hexamer assembles on each DNA strand where it exits the tetramer. Each RuvB hexamer is contacted by two RuvA subunits (via domain III) on 2 adjacent RuvB subunits; this complex drives branch migration. In the full resolvosome a probable DNA-RuvA(4)-RuvB(12)-RuvC(2) complex forms which resolves the HJ.

It is found in the cytoplasm. It carries out the reaction ATP + H2O = ADP + phosphate + H(+). The RuvA-RuvB-RuvC complex processes Holliday junction (HJ) DNA during genetic recombination and DNA repair, while the RuvA-RuvB complex plays an important role in the rescue of blocked DNA replication forks via replication fork reversal (RFR). RuvA specifically binds to HJ cruciform DNA, conferring on it an open structure. The RuvB hexamer acts as an ATP-dependent pump, pulling dsDNA into and through the RuvAB complex. RuvB forms 2 homohexamers on either side of HJ DNA bound by 1 or 2 RuvA tetramers; 4 subunits per hexamer contact DNA at a time. Coordinated motions by a converter formed by DNA-disengaged RuvB subunits stimulates ATP hydrolysis and nucleotide exchange. Immobilization of the converter enables RuvB to convert the ATP-contained energy into a lever motion, pulling 2 nucleotides of DNA out of the RuvA tetramer per ATP hydrolyzed, thus driving DNA branch migration. The RuvB motors rotate together with the DNA substrate, which together with the progressing nucleotide cycle form the mechanistic basis for DNA recombination by continuous HJ branch migration. Branch migration allows RuvC to scan DNA until it finds its consensus sequence, where it cleaves and resolves cruciform DNA. This Corynebacterium aurimucosum (strain ATCC 700975 / DSM 44827 / CIP 107346 / CN-1) (Corynebacterium nigricans) protein is Holliday junction branch migration complex subunit RuvB.